Here is a 147-residue protein sequence, read N- to C-terminus: Large ribosomal subunit protein uL11 (147 aa).

The protein belongs to the universal ribosomal protein uL11 family. As to quaternary structure, part of the ribosomal stalk of the 50S ribosomal subunit. Interacts with L10 and the large rRNA to form the base of the stalk. L10 forms an elongated spine to which L12 dimers bind in a sequential fashion forming a multimeric L10(L12)X complex. Post-translationally, one or more lysine residues are methylated.

Its function is as follows. Forms part of the ribosomal stalk which helps the ribosome interact with GTP-bound translation factors. The sequence is that of Large ribosomal subunit protein uL11 from Sorangium cellulosum (strain So ce56) (Polyangium cellulosum (strain So ce56)).